The following is a 56-amino-acid chain: MAVPARRTSKAKKNKRRTHKGLTTPGLSRDSETGEYRMSHRISPDGTYKGRTIIEK.

A disordered region spans residues 1-56 (MAVPARRTSKAKKNKRRTHKGLTTPGLSRDSETGEYRMSHRISPDGTYKGRTIIEK). The segment covering 7 to 20 (RTSKAKKNKRRTHK) has biased composition (basic residues). A compositionally biased stretch (basic and acidic residues) spans 29–38 (RDSETGEYRM).

This sequence belongs to the bacterial ribosomal protein bL32 family.

In Listeria monocytogenes serotype 4a (strain HCC23), this protein is Large ribosomal subunit protein bL32.